A 152-amino-acid polypeptide reads, in one-letter code: uncharacterized protein (152 aa).

The signal sequence occupies residues 1-23; sequence MYSILIACLVLLLCLVIYVGHRA.

Belongs to the asfivirus EP152R family.

The protein localises to the virion. This is an uncharacterized protein from Ornithodoros (relapsing fever ticks).